We begin with the raw amino-acid sequence, 104 residues long: Large ribosomal subunit protein uL23 (104 aa).

This sequence belongs to the universal ribosomal protein uL23 family. In terms of assembly, part of the 50S ribosomal subunit. Contacts protein L29, and trigger factor when it is bound to the ribosome.

In terms of biological role, one of the early assembly proteins it binds 23S rRNA. One of the proteins that surrounds the polypeptide exit tunnel on the outside of the ribosome. Forms the main docking site for trigger factor binding to the ribosome. The protein is Large ribosomal subunit protein uL23 of Ralstonia pickettii (strain 12J).